A 336-amino-acid polypeptide reads, in one-letter code: Zinc finger protein GFI1 homolog pag-3 (336 aa).

5 consecutive C2H2-type zinc fingers follow at residues 126–148 (FHCQKCTKLFSTIAALEQHQQVH), 154–176 (FECKQCGKTFKRSSTLSTHLLIH), 182–204 (YPCEYCGKRFHQKSDMKKHTYIH), 210–232 (HKCTVCGKAFSQSSNLITHTRKH), and 238–260 (FACDVCGRTFQRKVDRRRHRESH). The disordered stretch occupies residues 253–290 (RRRHRESHHPGHPEECVSASQISSDLSPKGYMTPPTSN).

As to quaternary structure, may interact with transcription factor unc-3. In terms of tissue distribution, expressed in the BDU neurons, the touch neurons, the VA, VB and VC motor neurons, two AVF interneurons and unidentified neurons of the retrovesicular ganglion (at protein level).

Its subcellular location is the nucleus. It is found in the cell projection. The protein localises to the axon. It localises to the perikaryon. In terms of biological role, transcription factor. Plays a role in the determination of neuroblast cell fate and neuronal differentiation. Negatively modulates expression of several components of dense-core vesicles (DCVs), thereby, in a DCV membrane protein ida-1-dependent manner, regulating neurosecretion. Negatively modulates the transcription of its own gene, the mechanosensory gene mec-3, and also other touch neuron-specific genes in the BDU neurons; required for coordinated movement. Required to determine the identity of BDU sensory neurons in concert with transcription factor unc-86, regulating expression of a number of genes, including transcription factors ceh-14 and ahr-1, neuropeptides flp-10, nlp-1 and nlp-15, and tyramine receptor-encoding ser-2. Acts in concert with non-canonical WNT signaling to negatively modulate transcription of mec-3 gene in BDU neurons. May act in concert with transcription factor unc-3 in motor neuron fate determination. May play a role programmed cell death. This chain is Zinc finger protein GFI1 homolog pag-3, found in Caenorhabditis elegans.